Here is a 327-residue protein sequence, read N- to C-terminus: uncharacterized protein (327 aa).

A signal peptide spans M1–C23. N-linked (GlcNAc...) asparagine; by host glycosylation is found at N144 and N239. A disordered region spans residues E298–E327. The span at E305–V319 shows a compositional bias: low complexity.

This is an uncharacterized protein from Human cytomegalovirus (strain AD169) (HHV-5).